A 190-amino-acid chain; its full sequence is MDRDEEPLSARPALETESLRFLHVTVGSLLASYGWYILFSCILLYIVIQRLSLRLRALRQRQLDQAETVLEPDVVVKRQEALAAARLRMQEDLNAQVEKHKEKLRQLEEEKRRQKIEMWDSMQEGRSYKRNSGRPQEEDGPGPSTSSVIPKGKSDKKPLRGGGYNPLTGEGGGTCSWRPGRRGPSSGGUN.

The chain crosses the membrane as a helical span at residues 28 to 48; sequence SLLASYGWYILFSCILLYIVI. The tract at residues 78 to 90 is VCP/p97-interacting motif (VIM); the sequence is RQEALAAARLRMQ. A disordered region spans residues 115 to 190; that stretch reads KIEMWDSMQE…RRGPSSGGUN (76 aa). The span at 160–174 shows a compositional bias: gly residues; it reads RGGGYNPLTGEGGGT. Residue selenocysteine 189 is a non-standard amino acid, selenocysteine.

The protein belongs to the selenoprotein S family. Interacts with DERL1 and (via VIM motif) with VCP, suggesting that it forms a membrane complex with DERL1 that serves as a receptor for VCP. Also interacts with DERL2, DERL3 and SELENOK. The SELENOK-SELENOS complex interacts with VCP. Interacts with CCDC47. In terms of processing, truncated SELENOS proteins produced by failed UGA/Sec decoding are ubiquitinated by the CRL2(KLHDC2) and CRL2(KLHDC3) complexes, which recognizes the glycine (Gly) at the C-terminus of truncated SELENOS proteins. Truncated SELENOS proteins produced by failed UGA/Sec decoding are also ubiquitinated by the CRL5(KLHDC1) complex.

It localises to the endoplasmic reticulum membrane. The protein resides in the cytoplasm. Functionally, involved in the degradation process of misfolded endoplasmic reticulum (ER) luminal proteins. Participates in the transfer of misfolded proteins from the ER to the cytosol, where they are destroyed by the proteasome in a ubiquitin-dependent manner. Probably acts by serving as a linker between DERL1, which mediates the retrotranslocation of misfolded proteins into the cytosol, and the ATPase complex VCP, which mediates the translocation and ubiquitination. The sequence is that of Selenoprotein S from Mus musculus (Mouse).